The following is a 263-amino-acid chain: Uroporphyrinogen-III C-methyltransferase (263 aa).

Residues P20, G96 to D98, T126 to A127, M180, and A237 each bind S-adenosyl-L-homocysteine.

Belongs to the precorrin methyltransferase family.

The enzyme catalyses uroporphyrinogen III + 2 S-adenosyl-L-methionine = precorrin-2 + 2 S-adenosyl-L-homocysteine + H(+). Its pathway is cofactor biosynthesis; adenosylcobalamin biosynthesis; precorrin-2 from uroporphyrinogen III: step 1/1. The protein operates within porphyrin-containing compound metabolism; siroheme biosynthesis; precorrin-2 from uroporphyrinogen III: step 1/1. In terms of biological role, catalyzes the two successive C-2 and C-7 methylation reactions involved in the conversion of uroporphyrinogen III to precorrin-2 via the intermediate formation of precorrin-1. It is a step in the biosynthesis of both cobalamin (vitamin B12) and siroheme. This Synechocystis sp. (strain ATCC 27184 / PCC 6803 / Kazusa) protein is Uroporphyrinogen-III C-methyltransferase (cobA).